The primary structure comprises 113 residues: Hydrogenase maturation factor HypA (113 aa).

His2 is a Ni(2+) binding site. 4 residues coordinate Zn(2+): Cys73, Cys76, Cys89, and Cys92.

It belongs to the HypA/HybF family.

Involved in the maturation of [NiFe] hydrogenases. Required for nickel insertion into the metal center of the hydrogenase. In Rhodopseudomonas palustris (strain BisA53), this protein is Hydrogenase maturation factor HypA.